We begin with the raw amino-acid sequence, 310 residues long: MLDANKLQQAVDQAYTQFHSLNGGQNADYIPFLANVPGQLAAVAIVTCDGNVYSAGDSDYRFALESISKVCTLALALEDVGPQAVQDKIGADPTGLPFNSVIALELHGGKPLSPLVNAGAIATTSLINAENAEQRWQRILHIQQQLAGEQVALSDEVNQSEQTTNFHNRAIAWLLYSAGYLYCDAMEACDVYTRQCSTLINTVELATLGATLAAGGVNPLTHKRVLQADNVPYILAEMMMEGLYGRSGDWAYRVGLPGKSGVGGGILAVVPGVMGIAAFSPPLDEEGNSVRGQKMVASVAKQLGYNVFKG.

Residues S66, N117, E161, N168, Y192, Y244, and V262 each coordinate substrate. Position 294 is an N6-acetyllysine (K294).

Belongs to the glutaminase family. Homotetramer.

It carries out the reaction L-glutamine + H2O = L-glutamate + NH4(+). The sequence is that of Glutaminase 1 from Shigella flexneri.